The chain runs to 132 residues: MTMTDPIADFLTRLRNANSAYHDEVTLPHSKIKANIAEILKKEGYISDYRTEDARVGKSLVVQLKYGPSRERSIAGLRRVSKPGLRVYAKSTNLPRVLGGLGVAIISTSSGLRTDRQAAREGVGGEVLAYVW.

Belongs to the universal ribosomal protein uS8 family. Part of the 30S ribosomal subunit. Contacts proteins S5 and S12.

Functionally, one of the primary rRNA binding proteins, it binds directly to 16S rRNA central domain where it helps coordinate assembly of the platform of the 30S subunit. In Mycolicibacterium vanbaalenii (strain DSM 7251 / JCM 13017 / BCRC 16820 / KCTC 9966 / NRRL B-24157 / PYR-1) (Mycobacterium vanbaalenii), this protein is Small ribosomal subunit protein uS8.